The following is a 948-amino-acid chain: UvrABC system protein A (948 aa).

Residue 33–40 participates in ATP binding; sequence GLSGSGKS. A C4-type zinc finger spans residues 252 to 279; sequence CPICGFSIGELEPRMFSFNSPFGACPTC. ABC transporter domains are found at residues 309 to 587 and 607 to 935; these read WIPT…KKSL and ASDR…KYLK. Position 639 to 646 (639 to 646) interacts with ATP; that stretch reads GVSGSGKS. Residues 738-764 form a C4-type zinc finger; the sequence is CEACKGDGIIKIEMHFLPDVYVPCEVC.

Belongs to the ABC transporter superfamily. UvrA family. Forms a heterotetramer with UvrB during the search for lesions.

It localises to the cytoplasm. In terms of biological role, the UvrABC repair system catalyzes the recognition and processing of DNA lesions. UvrA is an ATPase and a DNA-binding protein. A damage recognition complex composed of 2 UvrA and 2 UvrB subunits scans DNA for abnormalities. When the presence of a lesion has been verified by UvrB, the UvrA molecules dissociate. This Staphylococcus aureus (strain MSSA476) protein is UvrABC system protein A.